Reading from the N-terminus, the 120-residue chain is Large ribosomal subunit protein bL19 (120 aa).

This sequence belongs to the bacterial ribosomal protein bL19 family.

This protein is located at the 30S-50S ribosomal subunit interface and may play a role in the structure and function of the aminoacyl-tRNA binding site. This is Large ribosomal subunit protein bL19 from Chlorobium luteolum (strain DSM 273 / BCRC 81028 / 2530) (Pelodictyon luteolum).